Reading from the N-terminus, the 216-residue chain is Probable RNA 2'-phosphotransferase 2 (216 aa).

Belongs to the KptA/TPT1 family.

In terms of biological role, removes the 2'-phosphate from RNA via an intermediate in which the phosphate is ADP-ribosylated by NAD followed by a presumed transesterification to release the RNA and generate ADP-ribose 1''-2''-cyclic phosphate (APPR&gt;P). May function as an ADP-ribosylase. This chain is Probable RNA 2'-phosphotransferase 2 (kptA2), found in Archaeoglobus fulgidus (strain ATCC 49558 / DSM 4304 / JCM 9628 / NBRC 100126 / VC-16).